The following is a 472-amino-acid chain: Glutamate--tRNA ligase (472 aa).

The 'HIGH' region signature appears at 18-28 (PSPTGYLHIGG). Basic and acidic residues predominate over residues 122-138 (RARGEKPRYDGRWRPEP). A disordered region spans residues 122-150 (RARGEKPRYDGRWRPEPGKTLPVPPSGVQ). The 'KMSKS' region motif lies at 250–254 (KLSKR). ATP is bound at residue Lys253.

It belongs to the class-I aminoacyl-tRNA synthetase family. Glutamate--tRNA ligase type 1 subfamily. In terms of assembly, monomer.

It is found in the cytoplasm. It carries out the reaction tRNA(Glu) + L-glutamate + ATP = L-glutamyl-tRNA(Glu) + AMP + diphosphate. In terms of biological role, catalyzes the attachment of glutamate to tRNA(Glu) in a two-step reaction: glutamate is first activated by ATP to form Glu-AMP and then transferred to the acceptor end of tRNA(Glu). The sequence is that of Glutamate--tRNA ligase from Thiobacillus denitrificans (strain ATCC 25259 / T1).